The primary structure comprises 163 residues: Nucleotide-binding protein BBR47_25280 (163 aa).

Belongs to the YajQ family.

Its function is as follows. Nucleotide-binding protein. In Brevibacillus brevis (strain 47 / JCM 6285 / NBRC 100599), this protein is Nucleotide-binding protein BBR47_25280.